Reading from the N-terminus, the 452-residue chain is tRNA modification GTPase MnmE (452 aa).

Residues Arg21, Glu78, and Lys118 each coordinate (6S)-5-formyl-5,6,7,8-tetrahydrofolate. The 162-residue stretch at 214 to 375 folds into the TrmE-type G domain; the sequence is GMKVVIAGRP…LRDHLKQAMG (162 aa). Asn224 is a binding site for K(+). GTP is bound by residues 224–229, 243–249, and 268–271; these read NAGKSS, TDIAGTT, and DTAG. Ser228 is a Mg(2+) binding site. Residues Thr243, Ile245, and Thr248 each contribute to the K(+) site. Thr249 lines the Mg(2+) pocket. A (6S)-5-formyl-5,6,7,8-tetrahydrofolate-binding site is contributed by Lys452.

Belongs to the TRAFAC class TrmE-Era-EngA-EngB-Septin-like GTPase superfamily. TrmE GTPase family. Homodimer. Heterotetramer of two MnmE and two MnmG subunits. K(+) serves as cofactor.

It is found in the cytoplasm. In terms of biological role, exhibits a very high intrinsic GTPase hydrolysis rate. Involved in the addition of a carboxymethylaminomethyl (cmnm) group at the wobble position (U34) of certain tRNAs, forming tRNA-cmnm(5)s(2)U34. The protein is tRNA modification GTPase MnmE of Haemophilus influenzae (strain 86-028NP).